Reading from the N-terminus, the 245-residue chain is Small ribosomal subunit protein uS2 (245 aa).

The protein belongs to the universal ribosomal protein uS2 family.

The sequence is that of Small ribosomal subunit protein uS2 from Dehalococcoides mccartyi (strain ATCC BAA-2266 / KCTC 15142 / 195) (Dehalococcoides ethenogenes (strain 195)).